Consider the following 415-residue polypeptide: uncharacterized protein (415 aa).

Residues C85, C91, C94, and C175 each coordinate [4Fe-4S] cluster. The S-adenosyl-L-methionine site is built by Q248, Y276, E297, and N344. C371 acts as the Nucleophile in catalysis.

This sequence belongs to the class I-like SAM-binding methyltransferase superfamily. RNA M5U methyltransferase family.

This is an uncharacterized protein from Leptospira interrogans serogroup Icterohaemorrhagiae serovar copenhageni (strain Fiocruz L1-130).